Reading from the N-terminus, the 394-residue chain is uncharacterized protein (394 aa).

Transmembrane regions (helical) follow at residues 22–42 (VLVSLFGVSLLLLCLAGVLLH), 60–80 (LALFDLHGLIGIWGLPWLLLF), 81–101 (GFTGALSGLGALGTLLLAPVA), 231–251 (LHLAMGLGACLLCASGLYLWL), 271–291 (GFCAGLVAAAALLLLGLQLAP), 303–323 (LFLVLWAAAGLAALLLPGDWP), 328–348 (LLGVAGLACLAAAVAHLAPWL), and 355–375 (ALGPDLTLILCGALLIRHAWM).

It is found in the cell membrane. This is an uncharacterized protein from Pseudomonas aeruginosa (strain ATCC 15692 / DSM 22644 / CIP 104116 / JCM 14847 / LMG 12228 / 1C / PRS 101 / PAO1).